The primary structure comprises 418 residues: Serine hydroxymethyltransferase (418 aa).

(6S)-5,6,7,8-tetrahydrofolate contacts are provided by residues Leu-121 and 125–127; that span reads GHL. Lys-230 is subject to N6-(pyridoxal phosphate)lysine. (6S)-5,6,7,8-tetrahydrofolate contacts are provided by residues Glu-246 and 355–357; that span reads SPF.

It belongs to the SHMT family. In terms of assembly, homodimer. The cofactor is pyridoxal 5'-phosphate.

Its subcellular location is the cytoplasm. The enzyme catalyses (6R)-5,10-methylene-5,6,7,8-tetrahydrofolate + glycine + H2O = (6S)-5,6,7,8-tetrahydrofolate + L-serine. Its pathway is one-carbon metabolism; tetrahydrofolate interconversion. The protein operates within amino-acid biosynthesis; glycine biosynthesis; glycine from L-serine: step 1/1. In terms of biological role, catalyzes the reversible interconversion of serine and glycine with tetrahydrofolate (THF) serving as the one-carbon carrier. This reaction serves as the major source of one-carbon groups required for the biosynthesis of purines, thymidylate, methionine, and other important biomolecules. Also exhibits THF-independent aldolase activity toward beta-hydroxyamino acids, producing glycine and aldehydes, via a retro-aldol mechanism. In Streptococcus pneumoniae serotype 4 (strain ATCC BAA-334 / TIGR4), this protein is Serine hydroxymethyltransferase.